Here is a 452-residue protein sequence, read N- to C-terminus: Probable receptor-like protein kinase At5g20050 (452 aa).

The signal sequence occupies residues 1–23 (MEDKKANIIATILILALVVVIIA). Over 24 to 33 (ARVSLKLSKT) the chain is Extracellular. A helical membrane pass occupies residues 34 to 54 (FYLIAGVDISLILAVICFLII). The Cytoplasmic portion of the chain corresponds to 55–452 (RSRYNKERKL…SSIISPISPR (398 aa)). Residues 103–392 (DGFRSLIGKG…MVIEMLEGRV (290 aa)) enclose the Protein kinase domain. ATP is bound by residues 109-117 (IGKGGSGSV) and K131. Y178 carries the phosphotyrosine modification. D236 serves as the catalytic Proton acceptor. 2 positions are modified to phosphothreonine: T270 and T275.

This sequence belongs to the protein kinase superfamily. Ser/Thr protein kinase family.

The protein resides in the membrane. It catalyses the reaction L-seryl-[protein] + ATP = O-phospho-L-seryl-[protein] + ADP + H(+). The catalysed reaction is L-threonyl-[protein] + ATP = O-phospho-L-threonyl-[protein] + ADP + H(+). The protein is Probable receptor-like protein kinase At5g20050 of Arabidopsis thaliana (Mouse-ear cress).